The following is a 248-amino-acid chain: Proteasome subunit alpha (248 aa).

It belongs to the peptidase T1A family. As to quaternary structure, the 20S proteasome core is composed of 14 alpha and 14 beta subunits that assemble into four stacked heptameric rings, resulting in a barrel-shaped structure. The two inner rings, each composed of seven catalytic beta subunits, are sandwiched by two outer rings, each composed of seven alpha subunits. The catalytic chamber with the active sites is on the inside of the barrel. Has a gated structure, the ends of the cylinder being occluded by the N-termini of the alpha-subunits. Is capped by the proteasome-associated ATPase, ARC.

Its subcellular location is the cytoplasm. The protein operates within protein degradation; proteasomal Pup-dependent pathway. Its activity is regulated as follows. The formation of the proteasomal ATPase ARC-20S proteasome complex, likely via the docking of the C-termini of ARC into the intersubunit pockets in the alpha-rings, may trigger opening of the gate for substrate entry. Interconversion between the open-gate and close-gate conformations leads to a dynamic regulation of the 20S proteasome proteolysis activity. Its function is as follows. Component of the proteasome core, a large protease complex with broad specificity involved in protein degradation. This Mycobacterium tuberculosis (strain ATCC 25177 / H37Ra) protein is Proteasome subunit alpha.